A 272-amino-acid polypeptide reads, in one-letter code: NADH-cytochrome b5 reductase 3 (272 aa).

The FAD-binding FR-type domain occupies 11–123 (DIKYPLRLID…RGPNGLLVYQ (113 aa)). Lys-13 carries the N6-acetyllysine modification. At Tyr-14 the chain carries Phosphotyrosine. Lys-21 carries the post-translational modification N6-acetyllysine. Residues Arg-63, Pro-64, Tyr-65, Val-80, Lys-82, and Tyr-84 each contribute to the FAD site. Lys-91 bears the N6-acetyllysine mark. Residues Lys-97, Met-98, Ser-99, and Thr-156 each contribute to the FAD site.

Belongs to the flavoprotein pyridine nucleotide cytochrome reductase family. As to quaternary structure, component of a complex composed of cytochrome b5, NADH-cytochrome b5 reductase (CYB5R3) and MTARC2. Interacts with MTLN; the interaction is required to maintain cellular lipid composition and leads to stimulation of mitochondrial respiratory complex I activity. FAD is required as a cofactor.

The protein resides in the endoplasmic reticulum membrane. It localises to the mitochondrion outer membrane. It carries out the reaction 2 Fe(III)-[cytochrome b5] + NADH = 2 Fe(II)-[cytochrome b5] + NAD(+) + H(+). Its function is as follows. Catalyzes the reduction of two molecules of cytochrome b5 using NADH as the electron donor. The polypeptide is NADH-cytochrome b5 reductase 3 (CYB5R3) (Sus scrofa (Pig)).